A 388-amino-acid polypeptide reads, in one-letter code: Mannitol-1-phosphate 5-dehydrogenase (388 aa).

An NAD(+)-binding site is contributed by 4 to 15; sequence AVHFGAGNIGRG.

This sequence belongs to the mannitol dehydrogenase family.

It catalyses the reaction D-mannitol 1-phosphate + NAD(+) = beta-D-fructose 6-phosphate + NADH + H(+). This chain is Mannitol-1-phosphate 5-dehydrogenase, found in Lactococcus lactis subsp. cremoris (strain SK11).